A 398-amino-acid chain; its full sequence is Argininosuccinate synthase (398 aa).

8–16 contributes to the ATP binding site; it reads AYSGGLDTS. Tyrosine 87 lines the L-citrulline pocket. Position 117 (glycine 117) interacts with ATP. Residues threonine 119, asparagine 123, and aspartate 124 each contribute to the L-aspartate site. Asparagine 123 serves as a coordination point for L-citrulline. L-citrulline-binding residues include arginine 127, serine 175, glutamate 260, and tyrosine 272.

It belongs to the argininosuccinate synthase family. Type 1 subfamily. In terms of assembly, homotetramer.

It localises to the cytoplasm. The catalysed reaction is L-citrulline + L-aspartate + ATP = 2-(N(omega)-L-arginino)succinate + AMP + diphosphate + H(+). Its pathway is amino-acid biosynthesis; L-arginine biosynthesis; L-arginine from L-ornithine and carbamoyl phosphate: step 2/3. The chain is Argininosuccinate synthase from Mycobacterium avium (strain 104).